The sequence spans 397 residues: Tyrosine aminotransferase (397 aa).

Residues glycine 34, tyrosine 66, tryptophan 131, and asparagine 184 each contribute to the substrate site. Position 247 is an N6-(pyridoxal phosphate)lysine (lysine 247). Position 375 (arginine 375) interacts with substrate.

This sequence belongs to the class-I pyridoxal-phosphate-dependent aminotransferase family. As to quaternary structure, homodimer. Pyridoxal 5'-phosphate is required as a cofactor.

The catalysed reaction is L-tyrosine + 2-oxoglutarate = 3-(4-hydroxyphenyl)pyruvate + L-glutamate. The enzyme catalyses 4-methylsulfanyl-2-oxobutanoate + L-tyrosine = 3-(4-hydroxyphenyl)pyruvate + L-methionine. It catalyses the reaction an aromatic L-alpha-amino acid + 2-oxoglutarate = an aromatic oxo-acid + L-glutamate. It carries out the reaction L-aspartate + 2-oxoglutarate = oxaloacetate + L-glutamate. It participates in amino-acid biosynthesis; L-methionine biosynthesis via salvage pathway; L-methionine from S-methyl-5-thio-alpha-D-ribose 1-phosphate: step 6/6. With respect to regulation, inhibited by malate and nitrotyrosine by approximately 20% at the higher concentration. At 100 uM, canaline and carboxymethoxylamine inhibit aminotransferase activity by 35 and 70%, respectively. Addition of 1.0 mM carboxymethoxylamine lead to a complete inhibition of the aminotransferase activity. Catalyzes the formation of methionine from 2-keto-4-methylthiobutyrate (KMTB) primarily using aromatic amino acids (tyrosine, phenylalanine and tryptophan) or glutamate as the amino donors. Histidine, leucine, asparagine, or arginine are also functional amino donors but to a lesser extent. Can also use alpha-ketoglutarate, oxaloacetate and pyruvate as the amino acceptors. The chain is Tyrosine aminotransferase (tyrB) from Klebsiella pneumoniae.